The following is a 226-amino-acid chain: ATP-dependent dethiobiotin synthetase BioD (226 aa).

14-19 (GIGKTF) contacts ATP. Thr-18 provides a ligand contact to Mg(2+). The active site involves Lys-39. Residue Ser-43 coordinates substrate. Residues Asp-56, 117-120 (EGVG), 177-178 (NT), 206-208 (PHI), and Asn-213 each bind ATP. Mg(2+) contacts are provided by Asp-56 and Glu-117.

Belongs to the dethiobiotin synthetase family. In terms of assembly, homodimer. The cofactor is Mg(2+).

The protein resides in the cytoplasm. It catalyses the reaction (7R,8S)-7,8-diammoniononanoate + CO2 + ATP = (4R,5S)-dethiobiotin + ADP + phosphate + 3 H(+). Its pathway is cofactor biosynthesis; biotin biosynthesis; biotin from 7,8-diaminononanoate: step 1/2. Functionally, catalyzes a mechanistically unusual reaction, the ATP-dependent insertion of CO2 between the N7 and N8 nitrogen atoms of 7,8-diaminopelargonic acid (DAPA, also called 7,8-diammoniononanoate) to form a ureido ring. In Xylella fastidiosa (strain Temecula1 / ATCC 700964), this protein is ATP-dependent dethiobiotin synthetase BioD.